Consider the following 142-residue polypeptide: Hemoglobin subunit theta-1 (142 aa).

Residues alanine 2–arginine 142 enclose the Globin domain. Heme b-binding residues include histidine 59 and histidine 88.

This sequence belongs to the globin family.

This is Hemoglobin subunit theta-1 (HBQ1) from Equus caballus (Horse).